A 156-amino-acid chain; its full sequence is E3 ubiquitin-protein ligase RNF181 (156 aa).

The segment at Cys-79–Arg-120 adopts an RING-type; atypical zinc-finger fold.

This sequence belongs to the RNF181 family.

The enzyme catalyses S-ubiquitinyl-[E2 ubiquitin-conjugating enzyme]-L-cysteine + [acceptor protein]-L-lysine = [E2 ubiquitin-conjugating enzyme]-L-cysteine + N(6)-ubiquitinyl-[acceptor protein]-L-lysine.. The protein operates within protein modification; protein ubiquitination. In terms of biological role, E3 ubiquitin-protein ligase which accepts ubiquitin from an E2 ubiquitin-conjugating enzyme in the form of a thioester and then directly transfers the ubiquitin to targeted substrates. Catalyzes monoubiquitination of 26S proteasome subunit PSMC2/RPT1. The chain is E3 ubiquitin-protein ligase RNF181 (rnf181) from Xenopus laevis (African clawed frog).